The following is a 136-amino-acid chain: Large-conductance mechanosensitive channel (136 aa).

2 consecutive transmembrane segments (helical) span residues 10 to 30 and 76 to 96; these read FAMRGNVVDLAVGVIIGAAFG and GAFIQNIFDFVIVAFAIFIAI.

The protein belongs to the MscL family. In terms of assembly, homopentamer.

The protein localises to the cell inner membrane. Its function is as follows. Channel that opens in response to stretch forces in the membrane lipid bilayer. May participate in the regulation of osmotic pressure changes within the cell. The sequence is that of Large-conductance mechanosensitive channel from Pectobacterium atrosepticum (strain SCRI 1043 / ATCC BAA-672) (Erwinia carotovora subsp. atroseptica).